A 676-amino-acid chain; its full sequence is Pentatricopeptide repeat-containing protein ATP4 homolog, chloroplastic (676 aa).

The N-terminal 73 residues, 1–73 (MASPSSLLSW…NSPRAAGLAR (73 aa)), are a transit peptide targeting the chloroplast. Residues 17-58 (LSFQPKNPSPSPATARVSVQDPPPPPSDANPSPGRSSNTSRY) form a disordered region. PPR repeat units lie at residues 148–182 (EVIL…GVQP), 183–217 (DNAT…GCSP), 218–252 (DMLT…KWQL), 253–287 (DPVI…GVKP), 288–322 (NLVV…EAVP), 323–353 (NKAT…MKDE), 358–388 (DVVL…MKAS), 396–430 (DSWS…GFKP), 431–465 (NIFI…GITP), and 532–566 (RMPY…GIYS). The 85-residue stretch at 578–662 (LHLRGLSVGA…WFLTTSVAAR (85 aa)) folds into the Smr domain.

This sequence belongs to the PPR family. P subfamily.

It is found in the plastid. The protein resides in the chloroplast. Its function is as follows. Involved in translation and accumulation of chloroplast ATP synthase subunits. This is Pentatricopeptide repeat-containing protein ATP4 homolog, chloroplastic from Oryza sativa subsp. japonica (Rice).